We begin with the raw amino-acid sequence, 1470 residues long: Histone acetyltransferase HAC4 (1470 aa).

Positions 1-10 (MNNNKEVPQN) are enriched in polar residues. 2 disordered regions span residues 1–20 (MNNNKEVPQNSVAVSSSSSA) and 342–376 (TNFQSAPNNRDNLPQVSQQLSNHGSRQHRGQHSQN). Low complexity predominate over residues 11–20 (SVAVSSSSSA). Polar residues predominate over residues 342-365 (TNFQSAPNNRDNLPQVSQQLSNHG). Residues 416–495 (GQTSSNTVLR…SISCRTCVAV (80 aa)) form a TAZ-type 1 zinc finger. The segment at 518–566 (SSKCQPKKSSKSRQAYKKGGAEAPSVDADLQRSIKRPKLHRPSQNITPE) is disordered. Basic residues predominate over residues 522–533 (QPKKSSKSRQAY). The PHD-type zinc-finger motif lies at 764–841 (HYVCAPCYNE…KYTCPSCYIQ (78 aa)). Residues 856-1293 (VPGATSLPVT…ILYHLHNPTA (438 aa)) enclose the CBP/p300-type HAT domain. Residues 979–981 (LDS), 998–999 (RT), and W1054 contribute to the acetyl-CoA site. 2 ZZ-type zinc fingers span residues 1175 to 1238 (HLQH…IKDV) and 1295 to 1347 (AFAT…SSTD). The Zn(2+) site is built by C1180, C1183, C1195, C1198, C1204, C1207, H1220, H1228, C1300, C1303, C1315, C1318, C1324, C1327, H1335, and H1337. The TAZ-type 2 zinc-finger motif lies at 1358–1436 (SQSYQVKLEK…KCTVPKCSGL (79 aa)).

In terms of tissue distribution, rosette leaves, stems and flowers.

The protein localises to the nucleus. The enzyme catalyses L-lysyl-[protein] + acetyl-CoA = N(6)-acetyl-L-lysyl-[protein] + CoA + H(+). In terms of biological role, acetyltransferase enzyme. Acetylates histones, giving a specific tag for transcriptional activation. The chain is Histone acetyltransferase HAC4 (HAC4) from Arabidopsis thaliana (Mouse-ear cress).